We begin with the raw amino-acid sequence, 210 residues long: Protein GrpE (210 aa).

A disordered region spans residues 1-42 (MANEERTIPETNVASERPEDPVESQTRAEGGEQIQEAAPETA).

This sequence belongs to the GrpE family. As to quaternary structure, homodimer.

It localises to the cytoplasm. In terms of biological role, participates actively in the response to hyperosmotic and heat shock by preventing the aggregation of stress-denatured proteins, in association with DnaK and GrpE. It is the nucleotide exchange factor for DnaK and may function as a thermosensor. Unfolded proteins bind initially to DnaJ; upon interaction with the DnaJ-bound protein, DnaK hydrolyzes its bound ATP, resulting in the formation of a stable complex. GrpE releases ADP from DnaK; ATP binding to DnaK triggers the release of the substrate protein, thus completing the reaction cycle. Several rounds of ATP-dependent interactions between DnaJ, DnaK and GrpE are required for fully efficient folding. The polypeptide is Protein GrpE (Nitrosococcus oceani (strain ATCC 19707 / BCRC 17464 / JCM 30415 / NCIMB 11848 / C-107)).